The chain runs to 207 residues: Outer-membrane lipoprotein LolB (207 aa).

The signal sequence occupies residues 1–21; it reads MPLPDFRLIRLLPLAALVLTA. Cys-22 carries the N-palmitoyl cysteine lipid modification. Cys-22 is lipidated: S-diacylglycerol cysteine.

This sequence belongs to the LolB family. Monomer.

It is found in the cell outer membrane. In terms of biological role, plays a critical role in the incorporation of lipoproteins in the outer membrane after they are released by the LolA protein. The chain is Outer-membrane lipoprotein LolB from Escherichia coli O127:H6 (strain E2348/69 / EPEC).